Reading from the N-terminus, the 66-residue chain is Large ribosomal subunit protein bL33c (66 aa).

This sequence belongs to the bacterial ribosomal protein bL33 family.

The protein resides in the plastid. Its subcellular location is the chloroplast. This is Large ribosomal subunit protein bL33c from Platanus occidentalis (Sycamore).